The chain runs to 406 residues: Probable endo-xylogalacturonan hydrolase A (406 aa).

The first 18 residues, 1–18, serve as a signal peptide directing secretion; the sequence is MLYPRNLALFSLLSLSSA. PbH1 repeat units follow at residues 183 to 213, 214 to 235, 237 to 257, and 299 to 320; these read TQHVTFKNLRMDATSNSQNPPKNTDGFDIGA, STHVTISSVSVTNDDDCVAFKP, SNYVTVEDVTCTGSHGISVGS, and VKNVTFSDFNVRGCDYAFQIES. Residue aspartate 228 is the Proton donor of the active site. Histidine 251 is a catalytic residue. Asparagine 301 carries an N-linked (GlcNAc...) asparagine glycan.

It belongs to the glycosyl hydrolase 28 family.

It is found in the secreted. Pectinolytic enzyme involved in the degradation of xylogalacturonan (xga), a galacturonan backbone heavily substituted with xylose, and which is one important component of the hairy regions of pectin. Activity requires a galacturonic acid backbone substituted with xylose. The polypeptide is Probable endo-xylogalacturonan hydrolase A (xghA) (Aspergillus fumigatus (strain ATCC MYA-4609 / CBS 101355 / FGSC A1100 / Af293) (Neosartorya fumigata)).